We begin with the raw amino-acid sequence, 134 residues long: Putative toxin MJ0605 (134 aa).

Belongs to the UPF0332 family.

Functionally, putative toxin component of a putative type VII toxin-antitoxin (TA) system. Its cognate antitoxin might be MJ0604. In Methanocaldococcus jannaschii (strain ATCC 43067 / DSM 2661 / JAL-1 / JCM 10045 / NBRC 100440) (Methanococcus jannaschii), this protein is Putative toxin MJ0605.